Consider the following 626-residue polypeptide: Deoxynucleoside triphosphate triphosphohydrolase SAMHD1 (626 aa).

Met1 carries the N-acetylmethionine modification. Residues 1–19 (MQRADSEQPSKRPRCDDSP) are compositionally biased toward basic and acidic residues. The tract at residues 1 to 36 (MQRADSEQPSKRPRCDDSPRTPSNTPSAEADWSPGL) is disordered. Ser18 carries the phosphoserine modification. Residues Thr21 and Thr25 each carry the phosphothreonine modification. A phosphoserine mark is found at Ser33 and Ser93. One can recognise an SAM domain in the interval 45 to 110 (WGPEQVCSFL…LSYIQRLVQI (66 aa)). Residues Lys116 and Val117 each coordinate GTP. Residue Asn119 coordinates dATP. Residue Asn119 participates in dCTP binding. Residue Asn119 participates in dGTP binding. Residue Asn119 participates in dTTP binding. GTP contacts are provided by Asp137, Gln142, and Arg145. Gln149 lines the dATP pocket. Gln149 is a binding site for dCTP. DGTP is bound by residues Gln149, Leu150, Val156, and Arg164. Residue Gln149 coordinates dTTP. Val156 and Arg164 together coordinate dATP. Residues Val156 and Arg164 each contribute to the dCTP site. DTTP-binding residues include Val156 and Arg164. An HD domain is found at 164-316 (RFEHSLGVGY…GIDVDKWDYF (153 aa)). Mn(2+) is bound by residues His167, His206, and Asp207. DATP is bound by residues His210 and His215. Residues His210 and His215 each coordinate dCTP. Positions 210 and 215 each coordinate dTTP. The active site involves His233. Asp311 lines the Mn(2+) pocket. Residues Lys312, Tyr315, Asp319, Arg333, Arg352, Lys354, Asn358, and Arg366 each coordinate dATP. The dCTP site is built by Lys312, Tyr315, Asp319, Arg333, Arg352, and Lys354. Residues Lys312, Tyr315, Asp319, Arg333, Arg352, Lys354, Asn358, and Arg366 each contribute to the dGTP site. Residues Lys312, Tyr315, Asp319, Arg333, Arg352, and Lys354 each coordinate dTTP. 2 residues coordinate dCTP: Arg366 and Arg372. Residues Tyr374, Gln375, His376, and Lys377 each coordinate dGTP. Positions 375, 376, and 377 each coordinate dATP. Gln375, His376, and Lys377 together coordinate dCTP. 3 residues coordinate dTTP: Gln375, His376, and Lys377. The GTP site is built by Arg451 and Lys455. Residues Lys467, Lys469, and Lys492 each participate in a glycyl lysine isopeptide (Lys-Gly) (interchain with G-Cter in SUMO2) cross-link. Lys523 contributes to the GTP binding site. Lys523 is a binding site for dATP. Lys523 contributes to the dCTP binding site. Lys523 provides a ligand contact to dGTP. Lys523 contributes to the dTTP binding site. Residue Thr592 is modified to (Microbial infection) Phosphothreonine. Position 592 is a phosphothreonine; by CDK1 (Thr592). A Glycyl lysine isopeptide (Lys-Gly) (interchain with G-Cter in SUMO2) cross-link involves residue Lys622.

This sequence belongs to the SAMHD1 family. In terms of assembly, homodimer; in absence of GTP and dNTP. Homotetramer; in GTP- and dNTP-bound form. Interacts with MRE11; leading to stimulate the exonuclease activity of MRE11. Interacts with RBBP8/CtIP. Interacts (via its C-terminus) with CD81. (Microbial infection) Interacts with HIV-2 viral protein Vpx; promoting interaction with a E3 ubiquitin-protein ligase complex containing DCAF1, leading to subsequent ubiquitination and degradation of SAMHD1. Requires Mn(2+) as cofactor. Phosphorylation at Thr-592 by CDK1 acts as a switch to control deoxynucleoside triphosphate (dNTPase)-dependent and -independent functions. Phosphorylation at Thr-592 takes place in cycling cells: it reduces the stability of the homotetramer, impairing the dNTPase activity and subsequent ability to restrict infection by viruses. It also inhibits ability to suppress LINE-1 retrotransposon activity. In contrast, phosphorylation at Thr-592 promotes DNA end resection at stalled replication forks in response to DNA damage. In terms of processing, (Microbial infection) Phosphorylation at Thr-592 by Epstein-Barr virus kinase BGLF4 and human cytomegalovirus/HCMV UL97 leads to a reduced level of dCTPase and dTTPase activity and the loss of viral restriction. Post-translationally, (Microbial infection) Ubiquitinated following interaction with HIV-2 viral protein Vpx; Vpx promotes interaction and with a DCX (DDB1-CUL4-X-box) E3 ubiquitin ligase, leading to proteasomal degradation. In terms of tissue distribution, expressed in heart, skeletal muscle, spleen, liver, small intestine, placenta, lung and peripheral blood leukocytes. No expression is seen in brain and thymus.

It localises to the nucleus. The protein localises to the chromosome. It catalyses the reaction a 2'-deoxyribonucleoside 5'-triphosphate + H2O = a 2'-deoxyribonucleoside + triphosphate + H(+). It carries out the reaction dATP + H2O = 2'-deoxyadenosine + triphosphate + H(+). The enzyme catalyses dCTP + H2O = 2'-deoxycytidine + triphosphate + H(+). The catalysed reaction is dGTP + H2O = 2'-deoxyguanosine + triphosphate + H(+). It catalyses the reaction dTTP + H2O = thymidine + triphosphate + H(+). Its activity is regulated as follows. Allosterically activated and regulated via the combined actions of GTP and dNTPs (dATP, dGTP, dTTP and dCTP): Allosteric site 1 binds GTP, while allosteric site 2 binds dNTP. Allosteric activation promotes the formation of highly active homotetramers. Phosphorylation at Thr-592 impairs homotetramerization, thereby inhibiting dNTPase activity, leading to reduced ability to restrict infection by viruses. Protein that acts both as a host restriction factor involved in defense response to virus and as a regulator of DNA end resection at stalled replication forks. Has deoxynucleoside triphosphate (dNTPase) activity, which is required to restrict infection by viruses, such as HIV-1: dNTPase activity reduces cellular dNTP levels to levels too low for retroviral reverse transcription to occur, blocking early-stage virus replication in dendritic and other myeloid cells. Likewise, suppresses LINE-1 retrotransposon activity. Not able to restrict infection by HIV-2 virus; because restriction activity is counteracted by HIV-2 viral protein Vpx. In addition to virus restriction, dNTPase activity acts as a regulator of DNA precursor pools by regulating dNTP pools. Phosphorylation at Thr-592 acts as a switch to control dNTPase-dependent and -independent functions: it inhibits dNTPase activity and ability to restrict infection by viruses, while it promotes DNA end resection at stalled replication forks. Functions during S phase at stalled DNA replication forks to promote the resection of gapped or reversed forks: acts by stimulating the exonuclease activity of MRE11, activating the ATR-CHK1 pathway and allowing the forks to restart replication. Its ability to promote degradation of nascent DNA at stalled replication forks is required to prevent induction of type I interferons, thereby preventing chronic inflammation. Ability to promote DNA end resection at stalled replication forks is independent of dNTPase activity. Enhances immunoglobulin hypermutation in B-lymphocytes by promoting transversion mutation. The protein is Deoxynucleoside triphosphate triphosphohydrolase SAMHD1 of Homo sapiens (Human).